We begin with the raw amino-acid sequence, 317 residues long: Acetyl-coenzyme A carboxylase carboxyl transferase subunit alpha (317 aa).

A CoA carboxyltransferase C-terminal domain is found at 37–292; the sequence is QISQKLEDTK…EEYILKAFNE (256 aa).

This sequence belongs to the AccA family. In terms of assembly, acetyl-CoA carboxylase is a heterohexamer composed of biotin carboxyl carrier protein (AccB), biotin carboxylase (AccC) and two subunits each of ACCase subunit alpha (AccA) and ACCase subunit beta (AccD).

The protein localises to the cytoplasm. The enzyme catalyses N(6)-carboxybiotinyl-L-lysyl-[protein] + acetyl-CoA = N(6)-biotinyl-L-lysyl-[protein] + malonyl-CoA. Its pathway is lipid metabolism; malonyl-CoA biosynthesis; malonyl-CoA from acetyl-CoA: step 1/1. Its function is as follows. Component of the acetyl coenzyme A carboxylase (ACC) complex. First, biotin carboxylase catalyzes the carboxylation of biotin on its carrier protein (BCCP) and then the CO(2) group is transferred by the carboxyltransferase to acetyl-CoA to form malonyl-CoA. This is Acetyl-coenzyme A carboxylase carboxyl transferase subunit alpha from Flavobacterium psychrophilum (strain ATCC 49511 / DSM 21280 / CIP 103535 / JIP02/86).